A 501-amino-acid polypeptide reads, in one-letter code: 2,3-bisphosphoglycerate-independent phosphoglycerate mutase (501 aa).

Residues Asp12 and Ser62 each coordinate Mn(2+). Ser62 (phosphoserine intermediate) is an active-site residue. Substrate contacts are provided by residues His121, 150–151 (RD), Arg182, Arg188, 253–256 (RSDR), and Lys322. Asp389, His393, Asp430, His431, and His449 together coordinate Mn(2+).

Belongs to the BPG-independent phosphoglycerate mutase family. As to quaternary structure, monomer. Mn(2+) is required as a cofactor.

It carries out the reaction (2R)-2-phosphoglycerate = (2R)-3-phosphoglycerate. The protein operates within carbohydrate degradation; glycolysis; pyruvate from D-glyceraldehyde 3-phosphate: step 3/5. Its function is as follows. Catalyzes the interconversion of 2-phosphoglycerate and 3-phosphoglycerate. The sequence is that of 2,3-bisphosphoglycerate-independent phosphoglycerate mutase from Ehrlichia ruminantium (strain Welgevonden).